A 337-amino-acid chain; its full sequence is Putative 2-aminoethylphosphonate-binding periplasmic protein (337 aa).

The N-terminal stretch at 1–21 (MKLSRLALLSVFALASAPSWA) is a signal peptide.

This sequence belongs to the bacterial solute-binding protein 1 family.

The protein resides in the periplasm. Functionally, probably part of the PhnSTUV complex (TC 3.A.1.11.5) involved in 2-aminoethylphosphonate import. In Salmonella typhi, this protein is Putative 2-aminoethylphosphonate-binding periplasmic protein (phnS).